The sequence spans 523 residues: Succinate-semialdehyde dehydrogenase, mitochondrial (523 aa).

Residues 1 to 35 (MATCFLLRNFCAARPALRPPGRLLREPAGAQRRSY) constitute a mitochondrion transit peptide. N6-acetyllysine; alternate is present on K114. K114 carries the post-translational modification N6-succinyllysine; alternate. N6-succinyllysine is present on residues K123 and K172. NAD(+)-binding positions include R201 and 216-219 (KPAE). R201 lines the substrate pocket. N6-acetyllysine; alternate is present on K253. Residue K253 is modified to N6-succinyllysine; alternate. 272–277 (GSTATG) lines the NAD(+) pocket. E294 functions as the Proton acceptor in the catalytic mechanism. R322 contacts substrate. The Nucleophile role is filled by C328. A disulfide bond links C328 and C330. N6-acetyllysine is present on K353. An N6-succinyllysine modification is found at K390. K399 carries the N6-acetyllysine modification. Residue S486 coordinates substrate. S487 carries the phosphoserine modification.

It belongs to the aldehyde dehydrogenase family. In terms of assembly, homotetramer. As to expression, brain, pancreas, heart, liver, skeletal muscle, kidney. Lower in spleen, lung, kidney and testis.

The protein localises to the mitochondrion. The catalysed reaction is succinate semialdehyde + NAD(+) + H2O = succinate + NADH + 2 H(+). The protein operates within amino-acid degradation; 4-aminobutanoate degradation. With respect to regulation, redox-regulated. Inhibited under oxydizing conditions. In terms of biological role, catalyzes one step in the degradation of the inhibitory neurotransmitter gamma-aminobutyric acid (GABA). In Rattus norvegicus (Rat), this protein is Succinate-semialdehyde dehydrogenase, mitochondrial (Aldh5a1).